Consider the following 418-residue polypeptide: Light-independent protochlorophyllide reductase subunit N (418 aa).

Residues cysteine 17, cysteine 42, and cysteine 103 each coordinate [4Fe-4S] cluster.

Belongs to the BchN/ChlN family. In terms of assembly, protochlorophyllide reductase is composed of three subunits; ChlL, ChlN and ChlB. Forms a heterotetramer of two ChlB and two ChlN subunits. Requires [4Fe-4S] cluster as cofactor.

The catalysed reaction is chlorophyllide a + oxidized 2[4Fe-4S]-[ferredoxin] + 2 ADP + 2 phosphate = protochlorophyllide a + reduced 2[4Fe-4S]-[ferredoxin] + 2 ATP + 2 H2O. The protein operates within porphyrin-containing compound metabolism; chlorophyll biosynthesis (light-independent). In terms of biological role, component of the dark-operative protochlorophyllide reductase (DPOR) that uses Mg-ATP and reduced ferredoxin to reduce ring D of protochlorophyllide (Pchlide) to form chlorophyllide a (Chlide). This reaction is light-independent. The NB-protein (ChlN-ChlB) is the catalytic component of the complex. In Prochlorococcus marinus (strain AS9601), this protein is Light-independent protochlorophyllide reductase subunit N.